We begin with the raw amino-acid sequence, 1028 residues long: MTDQENNNNISSNPFAALFGSLADAKQFAAIQKEQLKQQSDELPASPDDSDNSVSESLDEFDYSVSEISRSFRTHQEMCEQLNINHMIQRIFLITLDNSDPSLKSGNGIPSRCVYLEEMAVELEDQDWLDMSNVEQAIFARLLLQDPGNHLISMTSSTTLNLSADRDAGERHIFCYLYSCFQRAKEEITKVPENLLPFAVQCRNLTVSNTRTVLLTPEIYVDQNIHEQLVDLMLEAIQGAHFEDVTEFLEEVIEALLLDEEVRTFPEVMIPVFDILLSRIKDLELCQILLYAYLDILLYFTRQKDMAKVFLEYIQPKDPSNGQMYQKTLLGVILNISCLLKTPGVVENHGFFLNPSRSSPQEIKVQEANIHQFMAQFHEKIYQMLKNLLQLSPETKHCILFWLGNCLHANAGRTKIWANQMPEIFFQMYASDAFFLNLGAALLKLCQPFCKPRSSRLLTFNPTYCVLKDLNDEERKIKSVHMRGLDKETCLIPAVQEPTFPQSYNLVTENLALTEYTLYLGFHRLHDQMVKINQNLHRLQVAWRDAQQSSSPAADNLREQFERLMTIYLSTKTAMTEPQMLQNCLNLQVSMAVLLVQLAIGNEGSQPIELSFPLPDGYSSLAYVPEFFADNLGDFLIFLRRFAEDILETSADSLEHVLHFITIFTGSIERMKNPHLRAKLAEVLEAVMPHLDQTPSPLVSSVFHRKRVFCNFPYAPQLAEALIKVFVDIEFTGDPHQFEQKFNYRRPMYPILRYMWGTDCYRESIKYLSKIKIQQIEKDRGEWESLTPEARREKEAGLQMFGQLARFHNIMSNETIGTLSFLTSEIKSLFVHPFLAERIISMLNYFLQHLVGPKMGALKVKDFSEFDFKPQQLVSDICTIYLNLGDEENFCATVPKDGRSYSPTLFAQTVRVLKKINKPGNMIVAFSNLAERIKSLADLQQQEEETYADACDEFLDPIMSTLMSDPVVLPSSRVTVDRSTIARHLLSDQTDPFNRSPLTMDQIRPNTELKEKIQRWLAERKQQKEQPE.

The interval 33–57 is disordered; that stretch reads KEQLKQQSDELPASPDDSDNSVSES. The residue at position 386 (Lys386) is an N6-acetyllysine. The U-box domain maps to 949-1023; the sequence is DACDEFLDPI…QRWLAERKQQ (75 aa).

This sequence belongs to the ubiquitin conjugation factor E4 family. As to expression, expressed in liver, heart, brain, kidney and testis.

Its subcellular location is the cytoplasm. The catalysed reaction is S-ubiquitinyl-[E2 ubiquitin-conjugating enzyme]-L-cysteine + [acceptor protein]-L-lysine = [E2 ubiquitin-conjugating enzyme]-L-cysteine + N(6)-ubiquitinyl-[acceptor protein]-L-lysine.. Its pathway is protein modification; protein ubiquitination. Functionally, ubiquitin-protein ligase that probably functions as an E3 ligase in conjunction with specific E1 and E2 ligases. May also function as an E4 ligase mediating the assembly of polyubiquitin chains on substrates ubiquitinated by another E3 ubiquitin ligase. Mediates 'Lys-48'-linked polyubiquitination of substrates. In Mus musculus (Mouse), this protein is Ubiquitin conjugation factor E4 A.